The sequence spans 432 residues: Probable rhamnogalacturonase E (432 aa).

The N-terminal stretch at 1–21 (MQSKTFSVLSSCLLLIATVQG) is a signal peptide. An intrachain disulfide couples cysteine 42 to cysteine 68. N-linked (GlcNAc...) asparagine glycosylation is found at asparagine 53, asparagine 91, and asparagine 106. The active-site Proton donor is aspartate 221. Cysteine 223 and cysteine 240 form a disulfide bridge. Residues asparagine 241 and asparagine 256 are each glycosylated (N-linked (GlcNAc...) asparagine). Histidine 296 is an active-site residue. Intrachain disulfides connect cysteine 329/cysteine 335 and cysteine 357/cysteine 366.

Belongs to the glycosyl hydrolase 28 family.

The protein localises to the secreted. In terms of biological role, pectinolytic enzymes consist of four classes of enzymes: pectine lyase, polygalacturonase, pectin methylesterase and rhamnogalacturonase. Hydrolyzes alpha-D-galacturonopyranosyl-(1,2)-alpha-L-rhamnopyranosyl linkages in the backbone of the hairy regions of pectins. The protein is Probable rhamnogalacturonase E (rhgE) of Aspergillus oryzae (strain ATCC 42149 / RIB 40) (Yellow koji mold).